Reading from the N-terminus, the 701-residue chain is Serologically defined colon cancer antigen 8 homolog (701 aa).

Acidic residues predominate over residues Met-1–Leu-13. 2 disordered regions span residues Met-1–Ser-67 and Ala-84–Asn-114. A compositionally biased stretch (polar residues) spans Ser-45 to Ser-67. Coiled coils occupy residues Ile-119–Tyr-173, His-203–Ala-258, and Gln-323–Arg-695. Residues Leu-364–Glu-387 are disordered.

Its subcellular location is the cytoplasm. It is found in the cytoskeleton. The protein localises to the microtubule organizing center. It localises to the centrosome. The protein resides in the centriole. Its subcellular location is the cilium basal body. It is found in the cell junction. Functionally, plays a role in the establishment of cell polarity and epithelial lumen formation. Also plays an essential role in ciliogenesis and subsequent Hedgehog signaling pathway that requires the presence of intact primary cilia for pathway activation. Mechanistically, interacts with and mediates RABEP2 centrosomal localization which is critical for ciliogenesis. This chain is Serologically defined colon cancer antigen 8 homolog (Sdccag8), found in Danio rerio (Zebrafish).